The following is a 175-amino-acid chain: Co-chaperone protein HscB homolog (175 aa).

Residues 7–79 enclose the J domain; it reads SHFDLFHLPA…LQRASYLLSL (73 aa).

The protein belongs to the HscB family. In terms of assembly, interacts with HscA and stimulates its ATPase activity.

In terms of biological role, co-chaperone involved in the maturation of iron-sulfur cluster-containing proteins. Seems to help targeting proteins to be folded toward HscA. The protein is Co-chaperone protein HscB homolog of Burkholderia vietnamiensis (strain G4 / LMG 22486) (Burkholderia cepacia (strain R1808)).